A 245-amino-acid chain; its full sequence is MNNGHLNQILLITDGCSNHGEDPLAMAAFAKEQGITVNVIGIMEENQIDPEAMKEVEGIALAGGGVHQVVYASQLSQTVQMVTKKAMTQTLQGVVNQELKQILGKNVEMEELSPEKRGEVMEVVDELGETVHLQVLVLVDTSASMAPKLPTVKEALIDLSVSLNSRIGNNEFAMCIFPGKKQEVELVLNWTPKLQSLSTLFAKLSTGGITPTGPAIREATLQFEKIRSRRGMLADDERRFDEFGM.

This is an uncharacterized protein from Bacillus subtilis (strain 168).